Reading from the N-terminus, the 158-residue chain is Protein Smg homolog (158 aa).

Belongs to the Smg family.

The protein is Protein Smg homolog of Alteromonas mediterranea (strain DSM 17117 / CIP 110805 / LMG 28347 / Deep ecotype).